A 455-amino-acid chain; its full sequence is Tubulin alpha-1 chain (455 aa).

GTP-binding residues include Q11, E75, S144, G148, T149, T183, N210, and N232. Residue E75 participates in Mg(2+) binding. E258 is an active-site residue.

Belongs to the tubulin family. In terms of assembly, dimer of alpha and beta chains. A typical microtubule is a hollow water-filled tube with an outer diameter of 25 nm and an inner diameter of 15 nM. Alpha-beta heterodimers associate head-to-tail to form protofilaments running lengthwise along the microtubule wall with the beta-tubulin subunit facing the microtubule plus end conferring a structural polarity. Microtubules usually have 13 protofilaments but different protofilament numbers can be found in some organisms and specialized cells. Mg(2+) serves as cofactor.

It is found in the cytoplasm. The protein resides in the cytoskeleton. The catalysed reaction is GTP + H2O = GDP + phosphate + H(+). In terms of biological role, tubulin is the major constituent of microtubules, a cylinder consisting of laterally associated linear protofilaments composed of alpha- and beta-tubulin heterodimers. Microtubules grow by the addition of GTP-tubulin dimers to the microtubule end, where a stabilizing cap forms. Below the cap, tubulin dimers are in GDP-bound state, owing to GTPase activity of alpha-tubulin. This is Tubulin alpha-1 chain (nda2) from Schizosaccharomyces pombe (strain 972 / ATCC 24843) (Fission yeast).